The chain runs to 321 residues: ATP-dependent 6-phosphofructokinase (321 aa).

ATP is bound at residue Gly-12. Residue 22-26 (RGVVR) coordinates ADP. ATP is bound by residues 73-74 (RF) and 103-106 (GDGS). A Mg(2+)-binding site is contributed by Asp-104. 127-129 (TID) is a binding site for substrate. Asp-129 acts as the Proton acceptor in catalysis. Arg-156 lines the ADP pocket. Residues Arg-164 and 171–173 (MGR) contribute to the substrate site. ADP is bound by residues 187 to 189 (GCE), Lys-213, and 215 to 217 (KRH). Substrate contacts are provided by residues Glu-224, Arg-245, and 251–254 (HTQR).

The protein belongs to the phosphofructokinase type A (PFKA) family. ATP-dependent PFK group I subfamily. Prokaryotic clade 'B1' sub-subfamily. In terms of assembly, homotetramer. The cofactor is Mg(2+).

Its subcellular location is the cytoplasm. The catalysed reaction is beta-D-fructose 6-phosphate + ATP = beta-D-fructose 1,6-bisphosphate + ADP + H(+). It participates in carbohydrate degradation; glycolysis; D-glyceraldehyde 3-phosphate and glycerone phosphate from D-glucose: step 3/4. With respect to regulation, allosterically activated by ADP and other diphosphonucleosides, and allosterically inhibited by phosphoenolpyruvate. Catalyzes the phosphorylation of D-fructose 6-phosphate to fructose 1,6-bisphosphate by ATP, the first committing step of glycolysis. The sequence is that of ATP-dependent 6-phosphofructokinase from Glaesserella parasuis serovar 5 (strain SH0165) (Haemophilus parasuis).